Consider the following 362-residue polypeptide: Ferrochelatase (362 aa).

Fe cation contacts are provided by H212 and E294.

Belongs to the ferrochelatase family.

It is found in the cytoplasm. The enzyme catalyses heme b + 2 H(+) = protoporphyrin IX + Fe(2+). The protein operates within porphyrin-containing compound metabolism; protoheme biosynthesis; protoheme from protoporphyrin-IX: step 1/1. Catalyzes the ferrous insertion into protoporphyrin IX. This is Ferrochelatase from Leptospira biflexa serovar Patoc (strain Patoc 1 / Ames).